The primary structure comprises 109 residues: RNA-binding protein Hfq (109 aa).

Residues 9-68 (DPFLNALRKEKVNVSVYLVNGIKLQGQVEAFDQFCIVLRNTVNQMVYKHAISTIVPAKSV) enclose the Sm domain. Residues 77–109 (PYHQNSNDEQDENVDDIHSDDLEIQENEGNIHE) are disordered.

It belongs to the Hfq family. In terms of assembly, homohexamer.

In terms of biological role, RNA chaperone that binds small regulatory RNA (sRNAs) and mRNAs to facilitate mRNA translational regulation in response to envelope stress, environmental stress and changes in metabolite concentrations. Also binds with high specificity to tRNAs. The sequence is that of RNA-binding protein Hfq from Francisella tularensis subsp. mediasiatica (strain FSC147).